Consider the following 405-residue polypeptide: Dematin (405 aa).

Disordered stretches follow at residues 1-29 (MERL…SPSS), 81-100 (SREC…PEVW), and 108-332 (IISQ…DRGN). The span at 11-29 (SPGSVSSSRDSSVPGSPSS) shows a compositional bias: low complexity. A phosphoserine mark is found at Ser-16, Ser-18, Ser-26, Ser-92, Ser-96, Ser-110, and Ser-113. Over residues 113-124 (STPRTTGTPRTS) the composition is skewed to low complexity. A Phosphothreonine modification is found at Thr-114. Residues Ser-156 and Ser-226 each carry the phosphoserine modification. Over residues 216–228 (EEEEEEEDDDSEE) the composition is skewed to acidic residues. The interaction with RASGRF2 stretch occupies residues 224–308 (DDSEEEIKAI…SRLQSTEFSP (85 aa)). Composition is skewed to basic and acidic residues over residues 229–242 (EIKA…EELS) and 252–261 (ILKEEMEKSL). 8 positions are modified to phosphoserine: Ser-269, Ser-279, Ser-289, Ser-303, Ser-315, Ser-333, Ser-372, and Ser-383. Positions 277 to 292 (HTSLHSGTSKSSSLPS) are enriched in low complexity. Over residues 294-322 (GRTTLSRLQSTEFSPSGSEAGSPGLQNGE) the composition is skewed to polar residues. In terms of domain architecture, HP spans 337-405 (VLEQKIYPYE…NELKKKASLF (69 aa)). A Phosphoserine; by PKA modification is found at Ser-403.

Belongs to the villin/gelsolin family. In terms of assembly, monomeric (isoform 2); under reducing conditions. Self-associates. Exists under oxidizing condition as a trimer of two isoforms 2 and isoform 1 linked by disulfide bonds. Found in a complex with DMTN, F-actin and spectrin. Found in a complex with ADD2, DMTN and SLC2A1. Interacts with F-actin, ITPKB and spectrin. Isoform 2 interacts with SLC2A1 (via C-terminus cytoplasmic region). Interacts with RASGRF2. Post-translationally, phosphorylated. Phosphorylation at Ser-403 by PKA causes the C-terminal headpiece domain to associate with the N-terminal core domain, and leads to the inhibition of its actin bundling activity. As to expression, expressed in platelets. Isoform 1 and isoform 2 are expressed in mature erythrocytes (at protein level).

Its subcellular location is the cytoplasm. It is found in the cytosol. The protein localises to the perinuclear region. The protein resides in the cytoskeleton. It localises to the cell membrane. Its subcellular location is the membrane. It is found in the endomembrane system. The protein localises to the cell projection. Membrane-cytoskeleton-associated protein with F-actin-binding activity that induces F-actin bundles formation and stabilization. Its F-actin-bundling activity is reversibly regulated upon its phosphorylation by the cAMP-dependent protein kinase A (PKA). Binds to the erythrocyte membrane glucose transporter-1 SLC2A1/GLUT1, and hence stabilizes and attaches the spectrin-actin network to the erythrocytic plasma membrane. Plays a role in maintaining the functional integrity of PKA-activated erythrocyte shape and the membrane mechanical properties. Also plays a role as a modulator of actin dynamics in fibroblasts; acts as a negative regulator of the RhoA activation pathway. In platelets, functions as a regulator of internal calcium mobilization across the dense tubular system that affects platelet granule secretion pathways and aggregation. Also required for the formation of a diverse set of cell protrusions, such as filopodia and lamellipodia, necessary for platelet cell spreading, motility and migration. Acts as a tumor suppressor and inhibits malignant cell transformation. This Mus musculus (Mouse) protein is Dematin (Dmtn).